The chain runs to 503 residues: Apolipoprotein N-acyltransferase (503 aa).

7 helical membrane-spanning segments follow: residues 13 to 32, 34 to 54, 63 to 83, 102 to 122, 124 to 144, 173 to 193, and 203 to 223; these read RWRG…LTAL, MPGF…LYAV, AFLS…WVLP, IVVF…FGFL, YFAP…YTIF, IVSI…NVLF, and LLIF…VHLL. The 230-residue stretch at 231–460 folds into the CN hydrolase domain; sequence FKVVALQPNV…RLAGEFHIKA (230 aa). Catalysis depends on glutamate 273, which acts as the Proton acceptor. Lysine 321 is an active-site residue. Cysteine 371 acts as the Nucleophile in catalysis. Residues 468–488 traverse the membrane as a helical segment; that stretch reads VRYGDWFFYLSVILAVVSVFI.

Belongs to the CN hydrolase family. Apolipoprotein N-acyltransferase subfamily.

Its subcellular location is the cell inner membrane. The catalysed reaction is N-terminal S-1,2-diacyl-sn-glyceryl-L-cysteinyl-[lipoprotein] + a glycerophospholipid = N-acyl-S-1,2-diacyl-sn-glyceryl-L-cysteinyl-[lipoprotein] + a 2-acyl-sn-glycero-3-phospholipid + H(+). It functions in the pathway protein modification; lipoprotein biosynthesis (N-acyl transfer). Functionally, catalyzes the phospholipid dependent N-acylation of the N-terminal cysteine of apolipoprotein, the last step in lipoprotein maturation. The protein is Apolipoprotein N-acyltransferase of Thermotoga maritima (strain ATCC 43589 / DSM 3109 / JCM 10099 / NBRC 100826 / MSB8).